A 69-amino-acid polypeptide reads, in one-letter code: Parvalbumin beta 3 (69 aa).

Position 1 is an N-acetylalanine (Ala1). The 36-residue stretch at Phe24–Gly59 folds into the EF-hand domain. The Ca(2+) site is built by Asp37, Asp39, Ser41, Phe43, Glu45, and Glu48.

This sequence belongs to the parvalbumin family.

Functionally, in muscle, parvalbumin is thought to be involved in relaxation after contraction. It binds two calcium ions. This Merluccius polli (Benguela hake) protein is Parvalbumin beta 3.